A 551-amino-acid chain; its full sequence is Dihydroxy-acid dehydratase (551 aa).

[2Fe-2S] cluster is bound at residue cysteine 52. Position 84 (aspartate 84) interacts with Mg(2+). A [2Fe-2S] cluster-binding site is contributed by cysteine 125. Positions 126 and 127 each coordinate Mg(2+). An N6-carboxylysine modification is found at lysine 127. Residue cysteine 197 participates in [2Fe-2S] cluster binding. A Mg(2+)-binding site is contributed by glutamate 448. The active-site Proton acceptor is serine 474.

Belongs to the IlvD/Edd family. Homodimer. It depends on [2Fe-2S] cluster as a cofactor. Requires Mg(2+) as cofactor.

The enzyme catalyses (2R)-2,3-dihydroxy-3-methylbutanoate = 3-methyl-2-oxobutanoate + H2O. It catalyses the reaction (2R,3R)-2,3-dihydroxy-3-methylpentanoate = (S)-3-methyl-2-oxopentanoate + H2O. The protein operates within amino-acid biosynthesis; L-isoleucine biosynthesis; L-isoleucine from 2-oxobutanoate: step 3/4. It functions in the pathway amino-acid biosynthesis; L-valine biosynthesis; L-valine from pyruvate: step 3/4. Functionally, functions in the biosynthesis of branched-chain amino acids. Catalyzes the dehydration of (2R,3R)-2,3-dihydroxy-3-methylpentanoate (2,3-dihydroxy-3-methylvalerate) into 2-oxo-3-methylpentanoate (2-oxo-3-methylvalerate) and of (2R)-2,3-dihydroxy-3-methylbutanoate (2,3-dihydroxyisovalerate) into 2-oxo-3-methylbutanoate (2-oxoisovalerate), the penultimate precursor to L-isoleucine and L-valine, respectively. In Francisella tularensis subsp. tularensis (strain FSC 198), this protein is Dihydroxy-acid dehydratase.